A 218-amino-acid polypeptide reads, in one-letter code: Small ribosomal subunit protein uS3 (218 aa).

The 69-residue stretch at 38-106 (IRKYIESKLA…RVHINIVEIK (69 aa)) folds into the KH type-2 domain.

The protein belongs to the universal ribosomal protein uS3 family. Part of the 30S ribosomal subunit. Forms a tight complex with proteins S10 and S14.

Its function is as follows. Binds the lower part of the 30S subunit head. Binds mRNA in the 70S ribosome, positioning it for translation. This is Small ribosomal subunit protein uS3 from Ligilactobacillus salivarius (strain UCC118) (Lactobacillus salivarius).